Reading from the N-terminus, the 114-residue chain is Protein vCCL3 (114 aa).

The first 26 residues, 1 to 26 (MWSMCWVLRAHLGLLFWVAVIELCAA), serve as a signal peptide directing secretion.

Its function is as follows. Acts as a highly selective agonist for human lymphoactin receptor XCR1. The chain is Protein vCCL3 (K4.1) from Human herpesvirus 8 type P (isolate GK18) (HHV-8).